Here is a 349-residue protein sequence, read N- to C-terminus: Phosphate acyltransferase (349 aa).

Belongs to the PlsX family. In terms of assembly, homodimer. Probably interacts with PlsY.

The protein localises to the cytoplasm. The enzyme catalyses a fatty acyl-[ACP] + phosphate = an acyl phosphate + holo-[ACP]. Its pathway is lipid metabolism; phospholipid metabolism. In terms of biological role, catalyzes the reversible formation of acyl-phosphate (acyl-PO(4)) from acyl-[acyl-carrier-protein] (acyl-ACP). This enzyme utilizes acyl-ACP as fatty acyl donor, but not acyl-CoA. In Colwellia psychrerythraea (strain 34H / ATCC BAA-681) (Vibrio psychroerythus), this protein is Phosphate acyltransferase.